The following is a 365-amino-acid chain: Bifunctional chorismate mutase/prephenate dehydratase (365 aa).

The region spanning 1 to 96 (MADQDQLKAL…SCLALEQPLK (96 aa)) is the Chorismate mutase domain. Substrate contacts are provided by arginine 11, arginine 28, lysine 39, and glutamate 57. The Prephenate dehydratase domain occupies 97 to 272 (VAYLGPEGTF…NSTRFLIIGN (176 aa)). An ACT domain is found at 284–361 (SIIVSMRNKP…VALKVLGSYP (78 aa)).

Its subcellular location is the cytoplasm. The catalysed reaction is chorismate = prephenate. It catalyses the reaction prephenate + H(+) = 3-phenylpyruvate + CO2 + H2O. It participates in amino-acid biosynthesis; L-phenylalanine biosynthesis; phenylpyruvate from prephenate: step 1/1. It functions in the pathway metabolic intermediate biosynthesis; prephenate biosynthesis; prephenate from chorismate: step 1/1. Its function is as follows. Catalyzes the Claisen rearrangement of chorismate to prephenate and the decarboxylation/dehydration of prephenate to phenylpyruvate. The sequence is that of Bifunctional chorismate mutase/prephenate dehydratase (pheA) from Pseudomonas aeruginosa (strain ATCC 15692 / DSM 22644 / CIP 104116 / JCM 14847 / LMG 12228 / 1C / PRS 101 / PAO1).